The following is a 425-amino-acid chain: Serine--tRNA ligase (425 aa).

Residue Thr231–Glu233 coordinates L-serine. Position 262–264 (Arg262–Glu264) interacts with ATP. Position 285 (Glu285) interacts with L-serine. Glu349–Ser352 contributes to the ATP binding site. Ser385 serves as a coordination point for L-serine.

Belongs to the class-II aminoacyl-tRNA synthetase family. Type-1 seryl-tRNA synthetase subfamily. Homodimer. The tRNA molecule binds across the dimer.

It localises to the cytoplasm. It carries out the reaction tRNA(Ser) + L-serine + ATP = L-seryl-tRNA(Ser) + AMP + diphosphate + H(+). The enzyme catalyses tRNA(Sec) + L-serine + ATP = L-seryl-tRNA(Sec) + AMP + diphosphate + H(+). Its pathway is aminoacyl-tRNA biosynthesis; selenocysteinyl-tRNA(Sec) biosynthesis; L-seryl-tRNA(Sec) from L-serine and tRNA(Sec): step 1/1. Functionally, catalyzes the attachment of serine to tRNA(Ser). Is also able to aminoacylate tRNA(Sec) with serine, to form the misacylated tRNA L-seryl-tRNA(Sec), which will be further converted into selenocysteinyl-tRNA(Sec). In Bacillus velezensis (strain DSM 23117 / BGSC 10A6 / LMG 26770 / FZB42) (Bacillus amyloliquefaciens subsp. plantarum), this protein is Serine--tRNA ligase.